The primary structure comprises 65 residues: uncharacterized protein (65 aa).

The protein localises to the plastid. Its subcellular location is the chloroplast. This is an uncharacterized protein from Guillardia theta (Cryptophyte).